A 208-amino-acid chain; its full sequence is Putative 3-methyladenine DNA glycosylase (208 aa).

It belongs to the DNA glycosylase MPG family.

The protein is Putative 3-methyladenine DNA glycosylase of Nitrobacter winogradskyi (strain ATCC 25391 / DSM 10237 / CIP 104748 / NCIMB 11846 / Nb-255).